A 443-amino-acid polypeptide reads, in one-letter code: MKEIGALQAEYPLVNKLIATEEVFWINPNIEKYETAIKDSPLNEENVKDAEERLKRFAPYIAKVFPETKGANGIIESPLVKIPSMKEALERKYEQPILGELLLKCDSHLPISGSIKARGGIYEVLKHAEQLALQHGMVTEEDNYSVLDSDTCREFFSKYSIAVGSTGNLGLSIGIMSANLGFNVTVHMSADAKEWKKDLLRSKGVNVIEYEDDYSKAVEEGRRQADADPSCYFVDDENSHDLFLGYAVAASRLQKQLEELEVVVDENHPLFVYLPCGVGGGPGGVAFGLKLLYKDNVHCYFAEPTHSPCMLLGLMTGLHDKISVQDIGIDNVTDADGLAVGRPSGFVGKTMEPFLSGNYTVSDEELYRLLKELADTENIYLEPSALAGMIGPVKVCKEDEYLQKLQLTEKVKKGTHIVWGTGGSMVPNDTMDEYYRKGLELTI.

Residue K116 is modified to N6-(pyridoxal phosphate)lysine.

It belongs to the serine/threonine dehydratase family. DsdA subfamily. It depends on pyridoxal 5'-phosphate as a cofactor.

It carries out the reaction D-serine = pyruvate + NH4(+). The protein is Probable D-serine dehydratase of Bacillus cereus (strain ATCC 14579 / DSM 31 / CCUG 7414 / JCM 2152 / NBRC 15305 / NCIMB 9373 / NCTC 2599 / NRRL B-3711).